A 630-amino-acid chain; its full sequence is 1-deoxy-D-xylulose-5-phosphate synthase (630 aa).

Residues His74 and 115–117 (GHA) contribute to the thiamine diphosphate site. A Mg(2+)-binding site is contributed by Asp146. Residues 147 to 148 (AA), Asn175, Phe284, and Glu364 contribute to the thiamine diphosphate site. Asn175 contacts Mg(2+).

Belongs to the transketolase family. DXPS subfamily. Homodimer. Mg(2+) is required as a cofactor. It depends on thiamine diphosphate as a cofactor.

The catalysed reaction is D-glyceraldehyde 3-phosphate + pyruvate + H(+) = 1-deoxy-D-xylulose 5-phosphate + CO2. Its pathway is metabolic intermediate biosynthesis; 1-deoxy-D-xylulose 5-phosphate biosynthesis; 1-deoxy-D-xylulose 5-phosphate from D-glyceraldehyde 3-phosphate and pyruvate: step 1/1. In terms of biological role, catalyzes the acyloin condensation reaction between C atoms 2 and 3 of pyruvate and glyceraldehyde 3-phosphate to yield 1-deoxy-D-xylulose-5-phosphate (DXP). This Methylacidiphilum infernorum (isolate V4) (Methylokorus infernorum (strain V4)) protein is 1-deoxy-D-xylulose-5-phosphate synthase.